The chain runs to 540 residues: Ribonuclease Y (540 aa).

The helical transmembrane segment at Thr4–Tyr24 threads the bilayer. One can recognise a KH domain in the interval Thr230–Leu293. An HD domain is found at Val356–Ala449.

It belongs to the RNase Y family.

It localises to the cell membrane. Its function is as follows. Endoribonuclease that initiates mRNA decay. This chain is Ribonuclease Y, found in Lactobacillus johnsonii (strain CNCM I-12250 / La1 / NCC 533).